The primary structure comprises 468 residues: Cysteine--tRNA ligase (468 aa).

Residue Cys28 participates in Zn(2+) binding. Positions 30–40 match the 'HIGH' region motif; sequence PTVYNYIHIGN. Positions 212, 237, and 241 each coordinate Zn(2+). A 'KMSKS' region motif is present at residues 271–275; the sequence is KMSKS. Lys274 is an ATP binding site.

It belongs to the class-I aminoacyl-tRNA synthetase family. In terms of assembly, monomer. Requires Zn(2+) as cofactor.

It localises to the cytoplasm. The catalysed reaction is tRNA(Cys) + L-cysteine + ATP = L-cysteinyl-tRNA(Cys) + AMP + diphosphate. This Lacticaseibacillus casei (strain BL23) (Lactobacillus casei) protein is Cysteine--tRNA ligase.